A 650-amino-acid chain; its full sequence is Macrolide export ATP-binding/permease protein MacB (650 aa).

One can recognise an ABC transporter domain in the interval 5-243 (LELKDIRRSY…AGGTEPVVNT (239 aa)). 41–48 (GASGSGKS) contributes to the ATP binding site. Helical transmembrane passes span 273–293 (LLTMLGIIIGIASVVSIVVVG), 523–543 (LFLTLVAVISLVVGGIGVMNI), 554–574 (ANDIPMDVGAGASYVLYHLFF), 580–600 (VLPAVGGALGITLSLLIAFTL), and 613–633 (PLALLLAFLCSTVTGILFGWL).

The protein belongs to the ABC transporter superfamily. Macrolide exporter (TC 3.A.1.122) family. Homodimer. Part of the tripartite efflux system MacAB-TolC, which is composed of an inner membrane transporter, MacB, a periplasmic membrane fusion protein, MacA, and an outer membrane component, TolC. The complex forms a large protein conduit and can translocate molecules across both the inner and outer membranes. Interacts with MacA.

It is found in the cell inner membrane. Its function is as follows. Part of the tripartite efflux system MacAB-TolC. MacB is a non-canonical ABC transporter that contains transmembrane domains (TMD), which form a pore in the inner membrane, and an ATP-binding domain (NBD), which is responsible for energy generation. Confers resistance against macrolides. The sequence is that of Macrolide export ATP-binding/permease protein MacB from Shigella dysenteriae serotype 1 (strain Sd197).